The following is a 501-amino-acid chain: NAD(P)H-quinone oxidoreductase subunit 2, chloroplastic (501 aa).

14 helical membrane passes run I15–L35, V42–L62, I82–I102, L107–C127, L132–Y152, L167–L187, F210–V230, P244–V264, W278–I298, L307–F327, I334–F354, F378–G398, G410–L430, and V466–I486.

This sequence belongs to the complex I subunit 2 family. As to quaternary structure, NDH is composed of at least 16 different subunits, 5 of which are encoded in the nucleus.

The protein localises to the plastid. It localises to the chloroplast thylakoid membrane. The enzyme catalyses a plastoquinone + NADH + (n+1) H(+)(in) = a plastoquinol + NAD(+) + n H(+)(out). It carries out the reaction a plastoquinone + NADPH + (n+1) H(+)(in) = a plastoquinol + NADP(+) + n H(+)(out). Its function is as follows. NDH shuttles electrons from NAD(P)H:plastoquinone, via FMN and iron-sulfur (Fe-S) centers, to quinones in the photosynthetic chain and possibly in a chloroplast respiratory chain. The immediate electron acceptor for the enzyme in this species is believed to be plastoquinone. Couples the redox reaction to proton translocation, and thus conserves the redox energy in a proton gradient. This Physcomitrium patens (Spreading-leaved earth moss) protein is NAD(P)H-quinone oxidoreductase subunit 2, chloroplastic.